The sequence spans 326 residues: Virulence factor CaO19.6688 (326 aa).

5 disordered regions span residues 19-91 (FNSL…KLPS), 112-137 (EEDN…GTTK), 161-184 (NTTI…PSFP), 222-245 (NVGQ…NDLL), and 276-326 (YEYG…PKIK). Composition is skewed to low complexity over residues 21-42 (SLKS…SSSS), 53-78 (NRNT…NTTP), and 117-137 (EQQL…GTTK).

Virulence factor involved in pathogen-host interaction. Modulates host pro-inflammatory cytokine interleukin-1 beta (IL1B) expression. The sequence is that of Virulence factor CaO19.6688 from Candida albicans (strain SC5314 / ATCC MYA-2876) (Yeast).